Here is a 517-residue protein sequence, read N- to C-terminus: Fluconazole resistance protein 1 (517 aa).

A DNA-binding region (zn(2)-C6 fungal-type) is located at residues Cys-26–Cys-52. Disordered stretches follow at residues Lys-106–Thr-137, Ser-250–Gln-270, Ser-284–Ser-307, and Gly-378–Phe-403. Over residues Ser-113–Ser-124 the composition is skewed to low complexity. Residues Ser-250–Pro-260 are compositionally biased toward polar residues. Low complexity predominate over residues Gln-261–Gln-270. Positions Asn-298 to Ser-307 are enriched in polar residues. The span at Gly-388 to Ser-398 shows a compositional bias: basic residues.

Its subcellular location is the nucleus. In terms of biological role, transcription factor that acts as a negative regulator of fluconazole resistance in C.albicans. Also confers fluconazole resistance in S.cerevisiae by activation of the PDR5 gene. This chain is Fluconazole resistance protein 1 (FCR1), found in Candida albicans (Yeast).